The chain runs to 82 residues: RNA-binding protein Hfq (82 aa).

A Sm domain is found at 9–69 (DQLLNTARKD…ISTIIPAKII (61 aa)).

It belongs to the Hfq family. In terms of assembly, homohexamer.

RNA chaperone that binds small regulatory RNA (sRNAs) and mRNAs to facilitate mRNA translational regulation in response to envelope stress, environmental stress and changes in metabolite concentrations. Also binds with high specificity to tRNAs. This Leptospira borgpetersenii serovar Hardjo-bovis (strain L550) protein is RNA-binding protein Hfq.